Reading from the N-terminus, the 222-residue chain is Superoxide dismutase [Mn], mitochondrial (222 aa).

The N-terminal 24 residues, 1 to 24 (MLSRAACSTSRRLVPALSVLGSRQ), are a transit peptide targeting the mitochondrion. A Mn(2+)-binding site is contributed by histidine 50. Tyrosine 58 carries the post-translational modification 3'-nitrotyrosine. Lysine 68 and lysine 75 each carry N6-acetyllysine; alternate. N6-succinyllysine; alternate is present on residues lysine 68 and lysine 75. Mn(2+) is bound at residue histidine 98. N6-acetyllysine; alternate is present on residues lysine 122 and lysine 130. Residues lysine 122 and lysine 130 each carry the N6-succinyllysine; alternate modification. Residues aspartate 183 and histidine 187 each contribute to the Mn(2+) site. Lysine 202 carries the post-translational modification N6-acetyllysine.

Belongs to the iron/manganese superoxide dismutase family. In terms of assembly, homotetramer. Mn(2+) is required as a cofactor. Post-translationally, nitrated under oxidative stress. Nitration coupled with oxidation inhibits the catalytic activity. In terms of processing, acetylation at Lys-122 decreases enzymatic activity. Deacetylated by SIRT3 upon exposure to ionizing radiations or after long fasting. Polyubiquitinated; leading to proteasomal degradation. Deubiquitinated by USP36 which increases protein stability.

It is found in the mitochondrion matrix. The catalysed reaction is 2 superoxide + 2 H(+) = H2O2 + O2. In terms of biological role, destroys superoxide anion radicals which are normally produced within the cells and which are toxic to biological systems. This chain is Superoxide dismutase [Mn], mitochondrial (SOD2), found in Bos taurus (Bovine).